The sequence spans 926 residues: Protein transport protein SEC24-2 (926 aa).

The tract at residues 1-54 (MSHHKKRVYPQAQAQYGQSATPLQQPAQLVPPQDPAAAGMSYAQMGMPPQGAAA) is disordered. A compositionally biased stretch (low complexity) spans 20-54 (ATPLQQPAQLVPPQDPAAAGMSYAQMGMPPQGAAA). Positions 231, 234, 253, and 256 each coordinate Zn(2+). The segment at 231 to 256 (CRRCRSYMNPFITFIEQGRRWRCNFC) is zinc finger-like.

Belongs to the SEC23/SEC24 family. SEC24 subfamily. The COPII coat is composed of at least 5 proteins: the SEC23/24 complex, the SEC13/31 complex, and the protein SAR1. Golgi apparatus membrane; Peripheral membrane protein; Cytoplasmic side.

Its subcellular location is the cytoplasm. The protein localises to the cytoplasmic vesicle. It localises to the COPII-coated vesicle membrane. The protein resides in the endoplasmic reticulum membrane. It is found in the golgi apparatus membrane. Component of the coat protein complex II (COPII) which promotes the formation of transport vesicles from the endoplasmic reticulum (ER). The coat has two main functions, the physical deformation of the endoplasmic reticulum membrane into vesicles and the selection of cargo molecules. The protein is Protein transport protein SEC24-2 (SEC242) of Saccharomyces uvarum (strain ATCC 76518 / CBS 7001 / CLIB 283 / NBRC 10550 / MCYC 623 / NCYC 2669 / NRRL Y-11845) (Yeast).